Here is a 324-residue protein sequence, read N- to C-terminus: Glyoxylate/hydroxypyruvate reductase B (324 aa).

Catalysis depends on residues R237 and E266. H285 (proton donor) is an active-site residue.

Belongs to the D-isomer specific 2-hydroxyacid dehydrogenase family. GhrB subfamily. As to quaternary structure, homodimer.

It localises to the cytoplasm. It catalyses the reaction glycolate + NADP(+) = glyoxylate + NADPH + H(+). The enzyme catalyses (R)-glycerate + NAD(+) = 3-hydroxypyruvate + NADH + H(+). It carries out the reaction (R)-glycerate + NADP(+) = 3-hydroxypyruvate + NADPH + H(+). Its function is as follows. Catalyzes the NADPH-dependent reduction of glyoxylate and hydroxypyruvate into glycolate and glycerate, respectively. This is Glyoxylate/hydroxypyruvate reductase B from Salmonella heidelberg (strain SL476).